A 472-amino-acid chain; its full sequence is tRNA-2-methylthio-N(6)-dimethylallyladenosine synthase (472 aa).

The region spanning 22-138 is the MTTase N-terminal domain; that stretch reads RSYWITTFGC…LETLLQQVDS (117 aa). Residues Cys-31, Cys-67, Cys-101, Cys-173, Cys-177, and Cys-180 each contribute to the [4Fe-4S] cluster site. A Radical SAM core domain is found at 159–396; that stretch reads RDSAICGWVN…NALVERNARE (238 aa). The 69-residue stretch at 399–467 folds into the TRAM domain; that stretch reads IRYQGRTEEV…SFSLSGTPLP (69 aa).

This sequence belongs to the methylthiotransferase family. MiaB subfamily. As to quaternary structure, monomer. It depends on [4Fe-4S] cluster as a cofactor.

The protein resides in the cytoplasm. The catalysed reaction is N(6)-dimethylallyladenosine(37) in tRNA + (sulfur carrier)-SH + AH2 + 2 S-adenosyl-L-methionine = 2-methylsulfanyl-N(6)-dimethylallyladenosine(37) in tRNA + (sulfur carrier)-H + 5'-deoxyadenosine + L-methionine + A + S-adenosyl-L-homocysteine + 2 H(+). Its function is as follows. Catalyzes the methylthiolation of N6-(dimethylallyl)adenosine (i(6)A), leading to the formation of 2-methylthio-N6-(dimethylallyl)adenosine (ms(2)i(6)A) at position 37 in tRNAs that read codons beginning with uridine. In Synechococcus sp. (strain CC9902), this protein is tRNA-2-methylthio-N(6)-dimethylallyladenosine synthase.